We begin with the raw amino-acid sequence, 71 residues long: uncharacterized protein (71 aa).

The helical transmembrane segment at 24–44 (FGGGGLSTAIYSIFAFFSIPL) threads the bilayer.

The protein localises to the membrane. This is an uncharacterized protein from Schizosaccharomyces pombe (strain 972 / ATCC 24843) (Fission yeast).